Here is a 131-residue protein sequence, read N- to C-terminus: Profilin-3 (131 aa).

It belongs to the profilin family. As to quaternary structure, occurs in many kinds of cells as a complex with monomeric actin in a 1:1 ratio.

The protein localises to the cytoplasm. The protein resides in the cytoskeleton. Its function is as follows. Binds to actin and affects the structure of the cytoskeleton. At high concentrations, profilin prevents the polymerization of actin, whereas it enhances it at low concentrations. By binding to PIP2, it inhibits the formation of IP3 and DG. The sequence is that of Profilin-3 from Lilium longiflorum (Trumpet lily).